The following is a 220-amino-acid chain: 7-cyano-7-deazaguanine synthase (220 aa).

10-20 is an ATP binding site; sequence FSGGQDSTTCL. Residues Cys-186, Cys-195, Cys-198, and Cys-201 each coordinate Zn(2+).

The protein belongs to the QueC family. In terms of assembly, homodimer. Zn(2+) serves as cofactor.

The catalysed reaction is 7-carboxy-7-deazaguanine + NH4(+) + ATP = 7-cyano-7-deazaguanine + ADP + phosphate + H2O + H(+). It participates in purine metabolism; 7-cyano-7-deazaguanine biosynthesis. Catalyzes the ATP-dependent conversion of 7-carboxy-7-deazaguanine (CDG) to 7-cyano-7-deazaguanine (preQ(0)). This chain is 7-cyano-7-deazaguanine synthase, found in Bacillus mycoides (strain KBAB4) (Bacillus weihenstephanensis).